Consider the following 356-residue polypeptide: uncharacterized protein (356 aa).

6 helical membrane-spanning segments follow: residues 2-22 (FEAIIYNISVMVAGIYLFHRL), 35-55 (EYVTVLMTFVSLLLAAYPIPF), 76-96 (NMIYTLTAAFIVSLVDVFIFG), 99-119 (IIYGITLIVIAGIVSAVGPFL), 124-144 (IISLLILNLISIIILLFLALL), and 151-171 (VEILVLIPISFIITIASAITF). The 136-residue stretch at 218-353 (QSLALLLIDI…GRNKVMFNPI (136 aa)) folds into the GGDEF domain.

It is found in the cell membrane. This is an uncharacterized protein from Staphylococcus epidermidis (strain ATCC 35984 / DSM 28319 / BCRC 17069 / CCUG 31568 / BM 3577 / RP62A).